The following is a 269-amino-acid chain: Ribosomal RNA small subunit methyltransferase A (269 aa).

S-adenosyl-L-methionine-binding residues include isoleucine 17, glycine 42, glutamate 64, aspartate 89, and asparagine 109.

Belongs to the class I-like SAM-binding methyltransferase superfamily. rRNA adenine N(6)-methyltransferase family. RsmA subfamily.

It is found in the cytoplasm. It carries out the reaction adenosine(1518)/adenosine(1519) in 16S rRNA + 4 S-adenosyl-L-methionine = N(6)-dimethyladenosine(1518)/N(6)-dimethyladenosine(1519) in 16S rRNA + 4 S-adenosyl-L-homocysteine + 4 H(+). Its function is as follows. Specifically dimethylates two adjacent adenosines (A1518 and A1519) in the loop of a conserved hairpin near the 3'-end of 16S rRNA in the 30S particle. May play a critical role in biogenesis of 30S subunits. The sequence is that of Ribosomal RNA small subunit methyltransferase A from Anaplasma phagocytophilum (strain HZ).